The following is a 266-amino-acid chain: uncharacterized protein (266 aa).

The TIR domain occupies Leu-112–Phe-261. Glu-192 is a catalytic residue.

The catalysed reaction is NAD(+) + H2O = ADP-D-ribose + nicotinamide + H(+). This is an uncharacterized protein from Bacillus subtilis (strain 168).